An 88-amino-acid chain; its full sequence is Small ribosomal subunit protein bS20 (88 aa).

The interval 1-27 (MANSKSAKKRALQSEKRRQHNASRRSM) is disordered.

It belongs to the bacterial ribosomal protein bS20 family.

Functionally, binds directly to 16S ribosomal RNA. The sequence is that of Small ribosomal subunit protein bS20 from Shewanella baltica (strain OS223).